The chain runs to 562 residues: Glutamyl-tRNA(Gln) amidotransferase subunit B, chloroplastic/mitochondrial (562 aa).

The segment at 48–76 is disordered; that stretch reads SVASNSKREPRPVKTRVMTQERGSGETQT. Residues 64 to 76 are compositionally biased toward polar residues; it reads VMTQERGSGETQT.

This sequence belongs to the GatB/GatE family. GatB subfamily. In terms of assembly, subunit of the heterotrimeric GatCAB amidotransferase (AdT) complex, composed of A, B and C subunits.

The protein localises to the mitochondrion. The protein resides in the plastid. It localises to the chloroplast. It catalyses the reaction L-glutamyl-tRNA(Gln) + L-glutamine + ATP + H2O = L-glutaminyl-tRNA(Gln) + L-glutamate + ADP + phosphate + H(+). Functionally, allows the formation of correctly charged Gln-tRNA(Gln) through the transamidation of misacylated Glu-tRNA(Gln) in chloroplasts and mitochondria. The reaction takes place in the presence of glutamine and ATP through an activated gamma-phospho-Glu-tRNA(Gln). The polypeptide is Glutamyl-tRNA(Gln) amidotransferase subunit B, chloroplastic/mitochondrial (Physcomitrium patens (Spreading-leaved earth moss)).